Here is a 306-residue protein sequence, read N- to C-terminus: Recombination-associated protein RdgC (306 aa).

The protein belongs to the RdgC family.

The protein localises to the cytoplasm. It is found in the nucleoid. In terms of biological role, may be involved in recombination. In Pseudomonas fluorescens (strain Pf0-1), this protein is Recombination-associated protein RdgC.